Here is a 263-residue protein sequence, read N- to C-terminus: Oxidoreductase UcpA (263 aa).

10–32 (LITGALQGIGEGIARTFARHGAN) contributes to the NAD(+) binding site. Serine 141 lines the substrate pocket. Tyrosine 155 serves as the catalytic Proton acceptor.

The protein belongs to the short-chain dehydrogenases/reductases (SDR) family.

This chain is Oxidoreductase UcpA (ucpA), found in Escherichia coli (strain K12).